The sequence spans 441 residues: Serine carboxypeptidase-like 4 (441 aa).

A signal peptide spans 1–29 (MANNNVYSVLKSLLLLLHLVFLSKQHVDS). Intrachain disulfides connect cysteine 88/cysteine 331, cysteine 252/cysteine 266, and cysteine 290/cysteine 297. N-linked (GlcNAc...) asparagine glycosylation occurs at asparagine 109. The active site involves serine 184. Asparagine 350 is a glycosylation site (N-linked (GlcNAc...) asparagine). Aspartate 366 is a catalytic residue. An N-linked (GlcNAc...) asparagine glycan is attached at asparagine 382. Histidine 419 is a catalytic residue.

This sequence belongs to the peptidase S10 family. Ubiquitous.

The protein resides in the secreted. Probable carboxypeptidase. This Arabidopsis thaliana (Mouse-ear cress) protein is Serine carboxypeptidase-like 4 (SCPL4).